The chain runs to 209 residues: Probable GTP-binding protein EngB (209 aa).

Positions 12–203 constitute an EngB-type G domain; it reads INLEIIFAGR…RDRLHEMKRD (192 aa). GTP is bound by residues 20–27, 45–49, 62–65, 142–145, and 179–181; these read GRSNVGKS, GVTLR, DMPG, NKMD, and ISA. Mg(2+) contacts are provided by S27 and T47.

Belongs to the TRAFAC class TrmE-Era-EngA-EngB-Septin-like GTPase superfamily. EngB GTPase family. Requires Mg(2+) as cofactor.

In terms of biological role, necessary for normal cell division and for the maintenance of normal septation. In Methanosarcina mazei (strain ATCC BAA-159 / DSM 3647 / Goe1 / Go1 / JCM 11833 / OCM 88) (Methanosarcina frisia), this protein is Probable GTP-binding protein EngB.